Consider the following 765-residue polypeptide: Putative chloride channel-like protein CLC-g (765 aa).

12 helical membrane passes run 67–87 (VFMK…IGFA), 116–136 (FVVF…ITAF), 167–187 (LIIK…IGKA), 190–210 (MVHT…KRYR), 232–252 (GAAA…LFAL), 262–282 (ALLW…RALI), 315–335 (VLPV…YNFL), 355–375 (ILLA…LPFL), 438–458 (FSVL…YGIV), 462–482 (GLFV…GMLL), 494–514 (AVLG…STCV), and 515–535 (ILLE…VLLI). The CBS 1 domain maps to 568-640 (MRQLLVGDVV…LLKKRVFMPS (73 aa)). S646 carries the phosphoserine modification. One can recognise a CBS 2 domain in the interval 687-748 (FSNASPYTVV…PEHILGLHPS (62 aa)). Residues 715–735 (HLLVIPKTSNRPPVVGILTRH) form a helical membrane-spanning segment.

It belongs to the chloride channel (TC 2.A.49) family. As to quaternary structure, homodimer. Interacts with PP2A5.

The protein resides in the membrane. Functionally, putative voltage-gated chloride channel. This chain is Putative chloride channel-like protein CLC-g (CLC-G), found in Arabidopsis thaliana (Mouse-ear cress).